Here is a 985-residue protein sequence, read N- to C-terminus: Ephrin type-B receptor 1-A (985 aa).

The first 19 residues, 1 to 19 (MELNVLLLLLCLSGGQVGA), serve as a signal peptide directing secretion. Residues 20–542 (VEETLMDTRT…YKSELREQLP (523 aa)) lie on the Extracellular side of the membrane. Residues 21 to 203 (EETLMDTRTA…FFKEMPSVVQ (183 aa)) enclose the Eph LBD domain. 2 consecutive Fibronectin type-III domains span residues 324 to 434 (VPSG…TNQA) and 435 to 532 (APSS…TAED). 3 N-linked (GlcNAc...) asparagine glycosylation sites follow: Asn-336, Asn-428, and Asn-482. The chain crosses the membrane as a helical span at residues 543-563 (LTGSAAAGVVFIVSLVAISIV). Residues 564–985 (CSRKRTYSKE…QITQSPTSIA (422 aa)) are Cytoplasmic-facing. The 264-residue stretch at 620–883 (VKIEEVIGAG…EIVNTLRPMI (264 aa)) folds into the Protein kinase domain. Residues 626 to 634 (IGAGEFGEV) and Lys-652 each bind ATP. The active-site Proton acceptor is Asp-745. An SAM domain is found at 912-976 (SAFTSVDDWL…LNSIQSMRVQ (65 aa)). The short motif at 983–985 (SIA) is the PDZ-binding element.

Belongs to the protein kinase superfamily. Tyr protein kinase family. Ephrin receptor subfamily. In terms of assembly, heterotetramer upon binding of the ligand. The heterotetramer is composed of an ephrin dimer and a receptor dimer. Oligomerization is probably required to induce biological responses. Phosphorylated. Autophosphorylation is stimulated by ligands.

It is found in the cell membrane. The protein localises to the early endosome membrane. Its subcellular location is the cell projection. It localises to the dendrite. The enzyme catalyses L-tyrosyl-[protein] + ATP = O-phospho-L-tyrosyl-[protein] + ADP + H(+). Functionally, receptor tyrosine kinase which binds promiscuously transmembrane ephrin-B family ligands residing on adjacent cells, leading to contact-dependent bidirectional signaling into neighboring cells. The signaling pathway downstream of the receptor is referred to as forward signaling while the signaling pathway downstream of the ephrin ligand is referred to as reverse signaling. May play a role in axon guidance during nervous system development. May also play an important redundant role with other ephrin-B receptors in development and maturation of dendritic spines and synapse formation. More generally, may play a role in targeted cell migration and adhesion. Upon activation by ephrin-B ligands activates the MAPK/ERK and the JNK signaling cascades to regulate cell migration and adhesion respectively. The sequence is that of Ephrin type-B receptor 1-A (ephb1-a) from Xenopus laevis (African clawed frog).